The chain runs to 286 residues: Acetyl-coenzyme A carboxylase carboxyl transferase subunit beta (286 aa).

Positions 26-286 (LWEKCVKCDA…LAKFTRRAAV (261 aa)) constitute a CoA carboxyltransferase N-terminal domain. Positions 30, 33, 49, and 52 each coordinate Zn(2+). A C4-type zinc finger spans residues 30–52 (CVKCDAVLYKPELEKNLDVCPKC).

This sequence belongs to the AccD/PCCB family. As to quaternary structure, acetyl-CoA carboxylase is a heterohexamer composed of biotin carboxyl carrier protein (AccB), biotin carboxylase (AccC) and two subunits each of ACCase subunit alpha (AccA) and ACCase subunit beta (AccD). The cofactor is Zn(2+).

The protein localises to the cytoplasm. It carries out the reaction N(6)-carboxybiotinyl-L-lysyl-[protein] + acetyl-CoA = N(6)-biotinyl-L-lysyl-[protein] + malonyl-CoA. It functions in the pathway lipid metabolism; malonyl-CoA biosynthesis; malonyl-CoA from acetyl-CoA: step 1/1. Its function is as follows. Component of the acetyl coenzyme A carboxylase (ACC) complex. Biotin carboxylase (BC) catalyzes the carboxylation of biotin on its carrier protein (BCCP) and then the CO(2) group is transferred by the transcarboxylase to acetyl-CoA to form malonyl-CoA. The polypeptide is Acetyl-coenzyme A carboxylase carboxyl transferase subunit beta (Cellvibrio japonicus (strain Ueda107) (Pseudomonas fluorescens subsp. cellulosa)).